Here is a 158-residue protein sequence, read N- to C-terminus: uncharacterized protein (158 aa).

The segment at 109 to 143 (RVHARTGLPCPVCGDTVREVSFADKSFQYCPTCQT) adopts an FPG-type zinc-finger fold.

This is an uncharacterized protein from Mycobacterium tuberculosis (strain ATCC 25618 / H37Rv).